The sequence spans 498 residues: ADP,ATP carrier protein 1 (498 aa).

Residues 1-33 (MSTTKSDNYISELRKVIWPIERYENKKFLPMAF) are Cytoplasmic-facing. Residues 34–54 (MMFCILLNYSTLRSIKDGFVV) traverse the membrane as a helical segment. Cys-37 and Cys-85 are oxidised to a cystine. The Extracellular segment spans residues 55–67 (TDIGAEAISFLKT). A helical membrane pass occupies residues 68 to 88 (YIVLPSAVIAMIVYVKLCDIL). Residues 89-92 (KQEN) lie on the Cytoplasmic side of the membrane. Residues 93–113 (VFYVITSFFLAYFALFAFVLY) traverse the membrane as a helical segment. Over 114–147 (PNPDLVHPNPEAIESLSLAYPNFKWFIRIVGKWS) the chain is Extracellular. A helical membrane pass occupies residues 148–168 (FASFYTMAELWGTLMLSLLFW). Residues 169–184 (QFANQITKTDEAKRFY) lie on the Cytoplasmic side of the membrane. The chain crosses the membrane as a helical span at residues 185 to 205 (SMFGLLANLALPVTSLIIGYF). The Extracellular portion of the chain corresponds to 206-218 (LHEKTQIVAEHLK). The chain crosses the membrane as a helical span at residues 219–239 (FTPLFVIMIISSLAVILTYRW). The Cytoplasmic segment spans residues 240-279 (MNKNVLTDPKLYDPALVKGKKAKAKMSLIESFKMIFTSKY). Residues 280–300 (VGYIALLLIAYGISVNLVEGV) form a helical membrane-spanning segment. Over 301–320 (WKSKLKELHPTKEAYTMYMG) the chain is Extracellular. A helical membrane pass occupies residues 321–341 (QFQAYQGWVAIAFMIIGSNIL). The Cytoplasmic segment spans residues 342–348 (RKVSWLT). Residues 349 to 369 (AAMITPLMMLITGIAFFAFIF) form a helical membrane-spanning segment. The Extracellular portion of the chain corresponds to 370-379 (FDSVIAMYLT). A helical membrane pass occupies residues 380-400 (GILASGPLALAVMIGTIQNVL). At 401–438 (SKGVKYSLFDATKNMAYIPLDKDLRVKGQAAVEVIGGR) the chain is on the cytoplasmic side. 436 to 442 (GGRFGKS) is a binding site for ATP. A helical membrane pass occupies residues 439–459 (FGKSGGAIIQSTFFIIFPALG). Over 460 to 465 (FVEATP) the chain is Extracellular. Residues 466–486 (YFASIFFVIVILWIYAVKGLN) form a helical membrane-spanning segment. Residues 487–498 (KEYQVLVNNTEK) lie on the Cytoplasmic side of the membrane.

Belongs to the ADP/ATP translocase tlc family.

The protein resides in the cell membrane. Provides the rickettsial cell with host ATP in exchange for rickettsial ADP. This is an obligate exchange system. This energy acquiring activity is an important component of rickettsial parasitism. This chain is ADP,ATP carrier protein 1 (tlcA), found in Rickettsia bellii (strain RML369-C).